Here is a 203-residue protein sequence, read N- to C-terminus: Small ribosomal subunit protein uS4 (203 aa).

The interval 1-46 is disordered; the sequence is MSKRQSAKYKLDRRMGENIWGRPKSPVNRREYGPGQHGQRRKGKMS. In terms of domain architecture, S4 RNA-binding spans 94–157; it reads RRLDAVVYRA…QEMALVAEAQ (64 aa).

The protein belongs to the universal ribosomal protein uS4 family. Part of the 30S ribosomal subunit. Contacts protein S5. The interaction surface between S4 and S5 is involved in control of translational fidelity.

One of the primary rRNA binding proteins, it binds directly to 16S rRNA where it nucleates assembly of the body of the 30S subunit. In terms of biological role, with S5 and S12 plays an important role in translational accuracy. The sequence is that of Small ribosomal subunit protein uS4 from Sphingopyxis alaskensis (strain DSM 13593 / LMG 18877 / RB2256) (Sphingomonas alaskensis).